The sequence spans 270 residues: Malonyl-[acyl-carrier protein] O-methyltransferase (270 aa).

The protein belongs to the methyltransferase superfamily.

It catalyses the reaction malonyl-[ACP] + S-adenosyl-L-methionine = malonyl-[ACP] methyl ester + S-adenosyl-L-homocysteine. Its pathway is cofactor biosynthesis; biotin biosynthesis. Functionally, converts the free carboxyl group of a malonyl-thioester to its methyl ester by transfer of a methyl group from S-adenosyl-L-methionine (SAM). It allows to synthesize pimeloyl-ACP via the fatty acid synthetic pathway. This is Malonyl-[acyl-carrier protein] O-methyltransferase from Marinomonas sp. (strain MWYL1).